A 283-amino-acid chain; its full sequence is 5'-nucleotidase SurE 2 (283 aa).

A divalent metal cation-binding residues include Asp19, Asp20, Ser52, and Asn110.

The protein belongs to the SurE nucleotidase family. A divalent metal cation is required as a cofactor.

Its subcellular location is the cytoplasm. The catalysed reaction is a ribonucleoside 5'-phosphate + H2O = a ribonucleoside + phosphate. Nucleotidase that shows phosphatase activity on nucleoside 5'-monophosphates. The polypeptide is 5'-nucleotidase SurE 2 (Chlamydia caviae (strain ATCC VR-813 / DSM 19441 / 03DC25 / GPIC) (Chlamydophila caviae)).